The following is a 65-amino-acid chain: Putative beta-neurotoxin RjAa4 (65 aa).

The 64-residue stretch at 1 to 64 (KEGYPMGRDG…VWDSSTNKCG (64 aa)) folds into the LCN-type CS-alpha/beta domain. Disulfide bonds link Cys-11-Cys-63, Cys-15-Cys-37, Cys-22-Cys-44, and Cys-26-Cys-46.

It belongs to the long (4 C-C) scorpion toxin superfamily. Sodium channel inhibitor family. Beta subfamily. As to expression, expressed by the venom gland.

Its subcellular location is the secreted. Functionally, beta toxins bind voltage-independently at site-4 of sodium channels (Nav) and shift the voltage of activation toward more negative potentials thereby affecting sodium channel activation and promoting spontaneous and repetitive firing. This chain is Putative beta-neurotoxin RjAa4, found in Rhopalurus junceus (Caribbean blue scorpion).